A 114-amino-acid chain; its full sequence is Putative pterin-4-alpha-carbinolamine dehydratase (114 aa).

The protein belongs to the pterin-4-alpha-carbinolamine dehydratase family.

The catalysed reaction is (4aS,6R)-4a-hydroxy-L-erythro-5,6,7,8-tetrahydrobiopterin = (6R)-L-erythro-6,7-dihydrobiopterin + H2O. This is Putative pterin-4-alpha-carbinolamine dehydratase from Methylococcus capsulatus (strain ATCC 33009 / NCIMB 11132 / Bath).